A 223-amino-acid polypeptide reads, in one-letter code: Proteasome subunit beta (223 aa).

Residues Met-1–Gly-6 constitute a propeptide, removed in mature form; by autocatalysis. The active-site Nucleophile is the Thr-7.

This sequence belongs to the peptidase T1B family. The 20S proteasome core is composed of 14 alpha and 14 beta subunits that assemble into four stacked heptameric rings, resulting in a barrel-shaped structure. The two inner rings, each composed of seven catalytic beta subunits, are sandwiched by two outer rings, each composed of seven alpha subunits. The catalytic chamber with the active sites is on the inside of the barrel. Has a gated structure, the ends of the cylinder being occluded by the N-termini of the alpha-subunits. Is capped at one or both ends by the proteasome regulatory ATPase, PAN.

The protein localises to the cytoplasm. The catalysed reaction is Cleavage of peptide bonds with very broad specificity.. With respect to regulation, the formation of the proteasomal ATPase PAN-20S proteasome complex, via the docking of the C-termini of PAN into the intersubunit pockets in the alpha-rings, triggers opening of the gate for substrate entry. Interconversion between the open-gate and close-gate conformations leads to a dynamic regulation of the 20S proteasome proteolysis activity. Its function is as follows. Component of the proteasome core, a large protease complex with broad specificity involved in protein degradation. The chain is Proteasome subunit beta from Methanocaldococcus vulcanius (strain ATCC 700851 / DSM 12094 / M7) (Methanococcus vulcanius).